The following is a 309-amino-acid chain: Taste receptor type 2 member 20 (309 aa).

Residues 1 to 6 are Extracellular-facing; the sequence is MMSFLH. The chain crosses the membrane as a helical span at residues 7 to 27; the sequence is IVFSILVVVAFILGNFANGFI. Over 28-46 the chain is Cytoplasmic; it reads ALINFIAWVKRQKISSADQ. Residues 47 to 67 traverse the membrane as a helical segment; that stretch reads IIAALAVSRVGLLWVILLHWY. Topologically, residues 68–79 are extracellular; that stretch reads STVLNPTSSNLK. Residues 80 to 100 form a helical membrane-spanning segment; sequence VIIFISNAWAVTNHFSIWLAT. Over 101 to 125 the chain is Cytoplasmic; sequence SLSIFYLLKIVNFSRLIFHHLKRKA. The helical transmembrane segment at 126–146 threads the bilayer; the sequence is KSVVLVIVLGSLFFLVCXLVM. Topologically, residues 147-178 are extracellular; it reads KNTYINVWTEECEGNVTWKIKLRNAMHLSNLT. The helical transmembrane segment at 179 to 199 threads the bilayer; it reads VAMLANLIPFTLTLISFLLLI. Residues 200 to 229 lie on the Cytoplasmic side of the membrane; that stretch reads YSLCKHLKKMQLHGKGSQDPSTKIHIKALQ. A helical transmembrane segment spans residues 230 to 250; sequence TVTSFLILLAIYFLCLITSFW. Residues 251-259 are Extracellular-facing; it reads NSKMRPKEI. Residues 260 to 280 form a helical membrane-spanning segment; sequence VLMLCQAFGIIYPSFHSFILI. Residues 281 to 309 are Cytoplasmic-facing; sequence WGNKTLKQTFLSVLWQVTCWAKGQNQSTP.

It belongs to the G-protein coupled receptor T2R family.

Its subcellular location is the membrane. In terms of biological role, receptor that may play a role in the perception of bitterness and is gustducin-linked. May play a role in sensing the chemical composition of the gastrointestinal content. The activity of this receptor may stimulate alpha gustducin, mediate PLC-beta-2 activation and lead to the gating of TRPM5. The polypeptide is Taste receptor type 2 member 20 (TAS2R20) (Pan troglodytes (Chimpanzee)).